Here is a 405-residue protein sequence, read N- to C-terminus: Formate-dependent phosphoribosylglycinamide formyltransferase (405 aa).

N(1)-(5-phospho-beta-D-ribosyl)glycinamide is bound by residues 22–23 (EL) and Glu-82. ATP contacts are provided by residues Arg-115, Lys-162, 167–172 (SSGKGQ), 202–205 (EGFI), and Glu-210. An ATP-grasp domain is found at 120–320 (RLAAETLGLA…EFELHARAIL (201 aa)). Mg(2+) contacts are provided by Glu-279 and Glu-291. N(1)-(5-phospho-beta-D-ribosyl)glycinamide is bound by residues Asp-298, Lys-367, and 374–375 (RR).

The protein belongs to the PurK/PurT family. Homodimer.

It carries out the reaction N(1)-(5-phospho-beta-D-ribosyl)glycinamide + formate + ATP = N(2)-formyl-N(1)-(5-phospho-beta-D-ribosyl)glycinamide + ADP + phosphate + H(+). The protein operates within purine metabolism; IMP biosynthesis via de novo pathway; N(2)-formyl-N(1)-(5-phospho-D-ribosyl)glycinamide from N(1)-(5-phospho-D-ribosyl)glycinamide (formate route): step 1/1. Functionally, involved in the de novo purine biosynthesis. Catalyzes the transfer of formate to 5-phospho-ribosyl-glycinamide (GAR), producing 5-phospho-ribosyl-N-formylglycinamide (FGAR). Formate is provided by PurU via hydrolysis of 10-formyl-tetrahydrofolate. This chain is Formate-dependent phosphoribosylglycinamide formyltransferase, found in Delftia acidovorans (strain DSM 14801 / SPH-1).